Reading from the N-terminus, the 201-residue chain is Translation initiation factor IF-3 (201 aa).

Positions 167–201 (PHRGAKTRARARHPGEPAGGPPPKPTAGDSKAAPN) are disordered. A compositionally biased stretch (basic residues) spans 169–178 (RGAKTRARAR).

Belongs to the IF-3 family. In terms of assembly, monomer.

It is found in the cytoplasm. In terms of biological role, IF-3 binds to the 30S ribosomal subunit and shifts the equilibrium between 70S ribosomes and their 50S and 30S subunits in favor of the free subunits, thus enhancing the availability of 30S subunits on which protein synthesis initiation begins. The protein is Translation initiation factor IF-3 of Mycobacterium bovis (strain ATCC BAA-935 / AF2122/97).